Consider the following 156-residue polypeptide: Cytochrome c-type biogenesis protein CcmE (156 aa).

Residues 1-7 (MTRRQRR) are Cytoplasmic-facing. Residues 8–28 (LGILLAALVCAGAATALTLNA) traverse the membrane as a helical; Signal-anchor for type II membrane protein segment. The Periplasmic segment spans residues 29–156 (FRSNLVFFFS…AKESARSASR (128 aa)). Positions 123 and 127 each coordinate heme.

Belongs to the CcmE/CycJ family.

Its subcellular location is the cell inner membrane. In terms of biological role, heme chaperone required for the biogenesis of c-type cytochromes. Transiently binds heme delivered by CcmC and transfers the heme to apo-cytochromes in a process facilitated by CcmF and CcmH. The sequence is that of Cytochrome c-type biogenesis protein CcmE from Ralstonia pickettii (strain 12J).